The chain runs to 496 residues: tRNA-2-methylthio-N(6)-dimethylallyladenosine synthase (496 aa).

The region spanning R10–V126 is the MTTase N-terminal domain. Residues C19, C55, C89, C163, C167, and C170 each coordinate [4Fe-4S] cluster. In terms of domain architecture, Radical SAM core spans R149 to E380. The region spanning K382–V451 is the TRAM domain. Residues A465–R496 are disordered. Pro residues predominate over residues A487–R496.

It belongs to the methylthiotransferase family. MiaB subfamily. Monomer. [4Fe-4S] cluster is required as a cofactor.

Its subcellular location is the cytoplasm. The catalysed reaction is N(6)-dimethylallyladenosine(37) in tRNA + (sulfur carrier)-SH + AH2 + 2 S-adenosyl-L-methionine = 2-methylsulfanyl-N(6)-dimethylallyladenosine(37) in tRNA + (sulfur carrier)-H + 5'-deoxyadenosine + L-methionine + A + S-adenosyl-L-homocysteine + 2 H(+). Catalyzes the methylthiolation of N6-(dimethylallyl)adenosine (i(6)A), leading to the formation of 2-methylthio-N6-(dimethylallyl)adenosine (ms(2)i(6)A) at position 37 in tRNAs that read codons beginning with uridine. The polypeptide is tRNA-2-methylthio-N(6)-dimethylallyladenosine synthase (Nocardioides sp. (strain ATCC BAA-499 / JS614)).